The chain runs to 257 residues: Zinc transporter ZupT (257 aa).

8 helical membrane-spanning segments follow: residues 5–25 (LILT…GVLG), 32–52 (LLAF…LMEM), 61–81 (GMSP…YLGL), 109–129 (AILL…ATFV), 137–157 (LGFG…LAVV), 171–191 (ILWA…AWLI), 195–215 (MISP…MVAL), and 236–256 (GVLC…TAGI). Asparagine 120 and glutamate 123 together coordinate Fe(2+). Zn(2+) is bound by residues glutamate 123 and histidine 148. Fe(2+) is bound by residues asparagine 149, glutamate 152, and glutamate 181. Position 152 (glutamate 152) interacts with Zn(2+).

The protein belongs to the ZIP transporter (TC 2.A.5) family. ZupT subfamily.

Its subcellular location is the cell inner membrane. It catalyses the reaction Zn(2+)(in) = Zn(2+)(out). Mediates zinc uptake. May also transport other divalent cations. The sequence is that of Zinc transporter ZupT from Shigella dysenteriae serotype 1 (strain Sd197).